The chain runs to 140 residues: ATP synthase epsilon chain (140 aa).

Belongs to the ATPase epsilon chain family. F-type ATPases have 2 components, CF(1) - the catalytic core - and CF(0) - the membrane proton channel. CF(1) has five subunits: alpha(3), beta(3), gamma(1), delta(1), epsilon(1). CF(0) has three main subunits: a, b and c.

It is found in the cell inner membrane. Functionally, produces ATP from ADP in the presence of a proton gradient across the membrane. This is ATP synthase epsilon chain from Neisseria gonorrhoeae (strain ATCC 700825 / FA 1090).